The following is a 131-amino-acid chain: Profilin (131 aa).

It belongs to the profilin family. Occurs in many kinds of cells as a complex with monomeric actin in a 1:1 ratio.

The protein resides in the cytoplasm. Its subcellular location is the cytoskeleton. Binds to actin and affects the structure of the cytoskeleton. At high concentrations, profilin prevents the polymerization of actin, whereas it enhances it at low concentrations. By binding to PIP2, it inhibits the formation of IP3 and DG. The chain is Profilin from Citrus sinensis (Sweet orange).